A 336-amino-acid polypeptide reads, in one-letter code: Nicotinate-nucleotide--dimethylbenzimidazole phosphoribosyltransferase (336 aa).

Catalysis depends on Glu-304, which acts as the Proton acceptor.

It belongs to the CobT family.

It carries out the reaction 5,6-dimethylbenzimidazole + nicotinate beta-D-ribonucleotide = alpha-ribazole 5'-phosphate + nicotinate + H(+). The protein operates within nucleoside biosynthesis; alpha-ribazole biosynthesis; alpha-ribazole from 5,6-dimethylbenzimidazole: step 1/2. Catalyzes the synthesis of alpha-ribazole-5'-phosphate from nicotinate mononucleotide (NAMN) and 5,6-dimethylbenzimidazole (DMB). The protein is Nicotinate-nucleotide--dimethylbenzimidazole phosphoribosyltransferase of Ruegeria sp. (strain TM1040) (Silicibacter sp.).